The sequence spans 272 residues: Dermonecrotic toxin SpeSicTox-betaIB2a (272 aa).

Histidine 5 is an active-site residue. Residues glutamate 25 and aspartate 27 each coordinate Mg(2+). Histidine 41 serves as the catalytic Nucleophile. 2 disulfides stabilise this stretch: cysteine 45–cysteine 51 and cysteine 47–cysteine 191. A Mg(2+)-binding site is contributed by aspartate 85.

This sequence belongs to the arthropod phospholipase D family. Class II subfamily. It depends on Mg(2+) as a cofactor. As to expression, expressed by the venom gland.

The protein resides in the secreted. The catalysed reaction is an N-(acyl)-sphingosylphosphocholine = an N-(acyl)-sphingosyl-1,3-cyclic phosphate + choline. The enzyme catalyses an N-(acyl)-sphingosylphosphoethanolamine = an N-(acyl)-sphingosyl-1,3-cyclic phosphate + ethanolamine. It carries out the reaction a 1-acyl-sn-glycero-3-phosphocholine = a 1-acyl-sn-glycero-2,3-cyclic phosphate + choline. It catalyses the reaction a 1-acyl-sn-glycero-3-phosphoethanolamine = a 1-acyl-sn-glycero-2,3-cyclic phosphate + ethanolamine. In terms of biological role, dermonecrotic toxins cleave the phosphodiester linkage between the phosphate and headgroup of certain phospholipids (sphingolipid and lysolipid substrates), forming an alcohol (often choline) and a cyclic phosphate. This toxin acts on sphingomyelin (SM). It may also act on ceramide phosphoethanolamine (CPE), lysophosphatidylcholine (LPC) and lysophosphatidylethanolamine (LPE), but not on lysophosphatidylserine (LPS), and lysophosphatidylglycerol (LPG). It acts by transphosphatidylation, releasing exclusively cyclic phosphate products as second products. Induces dermonecrosis, hemolysis, increased vascular permeability, edema, inflammatory response, and platelet aggregation. This chain is Dermonecrotic toxin SpeSicTox-betaIB2a, found in Sicarius peruensis (Six-eyed sand spider).